A 263-amino-acid chain; its full sequence is MKKVPLVIGGKTLSSRFFIGTGRYPNPVVQNETIKASGAEVLTFAIRRINLEHPDEDAILQHLEGRTFQYLPNTSGANNAEEAIRIARLARAAGLSDWIKVEISVSEKTLLPDPVETLKATEALAKEGFTVLPYTSDDPILCKKLEEVGAAAVMPGASPIGTGLGILNPYNLGVIVEEASVPIIVDAGLGSASDVAKAMELGADGVLMNTAVAKAKDPVKMALAMKQAIEAGLLSYEAGRIPMKRYATASSQLDHLLSSHSKG.

Catalysis depends on K100, which acts as the Schiff-base intermediate with DXP. Residues G161, 187 to 188, and 209 to 210 contribute to the 1-deoxy-D-xylulose 5-phosphate site; these read AG and NT.

Belongs to the ThiG family. In terms of assembly, homotetramer. Forms heterodimers with either ThiH or ThiS.

Its subcellular location is the cytoplasm. The catalysed reaction is [ThiS sulfur-carrier protein]-C-terminal-Gly-aminoethanethioate + 2-iminoacetate + 1-deoxy-D-xylulose 5-phosphate = [ThiS sulfur-carrier protein]-C-terminal Gly-Gly + 2-[(2R,5Z)-2-carboxy-4-methylthiazol-5(2H)-ylidene]ethyl phosphate + 2 H2O + H(+). Its pathway is cofactor biosynthesis; thiamine diphosphate biosynthesis. In terms of biological role, catalyzes the rearrangement of 1-deoxy-D-xylulose 5-phosphate (DXP) to produce the thiazole phosphate moiety of thiamine. Sulfur is provided by the thiocarboxylate moiety of the carrier protein ThiS. In vitro, sulfur can be provided by H(2)S. The protein is Thiazole synthase of Shouchella clausii (strain KSM-K16) (Alkalihalobacillus clausii).